The following is a 409-amino-acid chain: MASGKATGKTDAPAPVIKLGGPKPPKVGSSGNASWFQAIKAKKLNSPQPKFEGSGVPDNENLKTSQQHGYWRRQLRFKPSKGGRKPVPDAWYFYYTGTGPAADLNWGDSQDGIVWVAAKGADVKSRSNQGTRDPDKFDQYPLRFSDGGPDGNFRWDFIPLNRGRSGRSTAASSAASSRAPSRDGSRGRRSGSEGDLIARAAKIIQDQQKRGSRITKAKADEMAHRRYCKRTIPPGYKVDQVFGPRTKGKEGNFGDDKMNEEGIKDGRVTAMLNLVPSSHACLFGSRVTPKLQPDGLHLKIEFTTVVSRDDPQFDNYVKICDQCVDGVGTRPKDDEPRPKSRSSSRPATRTSSPALRQQPQKKEKKPKKQDDEVDKALTSDEERNNAQLEFDDEPKVINWGDSALGENEL.

5 disordered regions span residues methionine 1–asparagine 32, leucine 44–glycine 69, alanine 121–serine 145, arginine 164–aspartate 195, and valine 238–asparagine 259. Positions proline 15 to glycine 31 are enriched in low complexity. The tract at residues serine 29–leucine 160 is RNA-binding. The 126-residue stretch at glycine 31 to aspartate 156 folds into the CoV N NTD domain. The span at arginine 164–alanine 179 shows a compositional bias: low complexity. Basic and acidic residues-rich tracts occupy residues proline 180–serine 192 and lysine 247–asparagine 259. A phosphoserine; by host mark is found at serine 190 and serine 192. One can recognise a CoV N CTD domain in the interval threonine 215–proline 331. The dimerization stretch occupies residues arginine 226 to aspartate 333. Cysteine 320 and cysteine 323 are disulfide-bonded. The tract at residues glycine 326–leucine 409 is disordered. Positions arginine 341–glutamine 358 are enriched in low complexity. Basic and acidic residues predominate over residues lysine 368–asparagine 384. The residue at position 378 (threonine 378) is a Phosphothreonine; by host. A Phosphoserine; by host modification is found at serine 379.

This sequence belongs to the gammacoronavirus nucleocapsid protein family. In terms of assembly, homooligomer. Both monomeric and oligomeric forms interact with RNA. Interacts with protein M. Interacts with NSP3; this interaction serves to tether the genome to the newly translated replicase-transcriptase complex at a very early stage of infection. ADP-ribosylated. The ADP-ribosylation is retained in the virion during infection. Post-translationally, phosphorylated on serine and threonine residues.

The protein resides in the virion. The protein localises to the host endoplasmic reticulum-Golgi intermediate compartment. Its subcellular location is the host Golgi apparatus. Its function is as follows. Packages the positive strand viral genome RNA into a helical ribonucleocapsid (RNP) and plays a fundamental role during virion assembly through its interactions with the viral genome and membrane protein M. Plays an important role in enhancing the efficiency of subgenomic viral RNA transcription as well as viral replication. In Gallus gallus (Chicken), this protein is Nucleoprotein.